The following is a 253-amino-acid chain: tRNA (guanine-N(1)-)-methyltransferase (253 aa).

S-adenosyl-L-methionine-binding positions include Gly113 and 133 to 138; that span reads IGDYVL.

This sequence belongs to the RNA methyltransferase TrmD family. In terms of assembly, homodimer.

The protein resides in the cytoplasm. The catalysed reaction is guanosine(37) in tRNA + S-adenosyl-L-methionine = N(1)-methylguanosine(37) in tRNA + S-adenosyl-L-homocysteine + H(+). Specifically methylates guanosine-37 in various tRNAs. This chain is tRNA (guanine-N(1)-)-methyltransferase, found in Chloroflexus aurantiacus (strain ATCC 29366 / DSM 635 / J-10-fl).